The primary structure comprises 185 residues: UPF0397 protein LGAS_1499 (185 aa).

5 helical membrane passes run 6–26, 46–66, 78–98, 118–138, and 147–167; these read GLSV…VILA, FLAL…GFIG, TWWS…LYGM, VQII…DILI, and FLQG…LGTI.

The protein belongs to the UPF0397 family.

The protein localises to the cell membrane. This Lactobacillus gasseri (strain ATCC 33323 / DSM 20243 / BCRC 14619 / CIP 102991 / JCM 1131 / KCTC 3163 / NCIMB 11718 / NCTC 13722 / AM63) protein is UPF0397 protein LGAS_1499.